The primary structure comprises 260 residues: NH(3)-dependent NAD(+) synthetase (260 aa).

Residue 31–38 participates in ATP binding; that stretch reads GLSGGLDS. Residue Asp-37 participates in Mg(2+) binding. Residue Arg-112 coordinates deamido-NAD(+). Thr-132 provides a ligand contact to ATP. Glu-137 serves as a coordination point for Mg(2+). ATP contacts are provided by Lys-161 and Ser-183.

This sequence belongs to the NAD synthetase family. Homodimer.

The enzyme catalyses deamido-NAD(+) + NH4(+) + ATP = AMP + diphosphate + NAD(+) + H(+). Its pathway is cofactor biosynthesis; NAD(+) biosynthesis; NAD(+) from deamido-NAD(+) (ammonia route): step 1/1. Its function is as follows. Catalyzes the ATP-dependent amidation of deamido-NAD to form NAD. Uses ammonia as a nitrogen source. This is NH(3)-dependent NAD(+) synthetase from Helicobacter pylori (strain J99 / ATCC 700824) (Campylobacter pylori J99).